A 236-amino-acid chain; its full sequence is uncharacterized protein (236 aa).

It belongs to the HyuE racemase family.

Its subcellular location is the cytoplasm. This is an uncharacterized protein from Schizosaccharomyces pombe (strain 972 / ATCC 24843) (Fission yeast).